The following is a 327-amino-acid chain: DNA-directed RNA polymerase subunit alpha (327 aa).

The interval 1-227 (MLIAHRPTLI…ELFGLARELN (227 aa)) is alpha N-terminal domain (alpha-NTD). Positions 244–327 (SDEDLRIPIE…GSYFDPNYGS (84 aa)) are alpha C-terminal domain (alpha-CTD).

Belongs to the RNA polymerase alpha chain family. As to quaternary structure, homodimer. The RNAP catalytic core consists of 2 alpha, 1 beta, 1 beta' and 1 omega subunit. When a sigma factor is associated with the core the holoenzyme is formed, which can initiate transcription.

The enzyme catalyses RNA(n) + a ribonucleoside 5'-triphosphate = RNA(n+1) + diphosphate. DNA-dependent RNA polymerase catalyzes the transcription of DNA into RNA using the four ribonucleoside triphosphates as substrates. The polypeptide is DNA-directed RNA polymerase subunit alpha (Tropheryma whipplei (strain TW08/27) (Whipple's bacillus)).